Here is an 88-residue protein sequence, read N- to C-terminus: Cell division topological specificity factor (88 aa).

It belongs to the MinE family.

Prevents the cell division inhibition by proteins MinC and MinD at internal division sites while permitting inhibition at polar sites. This ensures cell division at the proper site by restricting the formation of a division septum at the midpoint of the long axis of the cell. This is Cell division topological specificity factor from Citrobacter koseri (strain ATCC BAA-895 / CDC 4225-83 / SGSC4696).